Consider the following 143-residue polypeptide: MSRSGVAVSDEALKAFNDLKLGKKFKSIIYKLNDAKTEIVVDSTSTEDAYDAFVEDLPENDCRYAVYDFEYEVGQGDGKRNKIVFYQWSPDTASVRAKMVYASSKDALRRALNGIGTEIQGTDFSEVAYESVLEKISRTTGLH.

Positions 5–137 constitute an ADF-H domain; sequence GVAVSDEALK…AYESVLEKIS (133 aa).

This sequence belongs to the actin-binding proteins ADF family.

The protein localises to the cytoplasm. It localises to the cytoskeleton. It is found in the nucleus matrix. Its function is as follows. Controls reversibly actin polymerization and depolymerization in a pH-sensitive manner. It has the ability to bind G- and F-actin in a 1:1 ratio of cofilin to actin. Binding to F-actin is regulated by tropomyosin. It is the major component of intranuclear and cytoplasmic actin rods. Required for accumulation of actin at the cell division site via depolymerizing actin at the cell ends. In association with myosin II has a role in the assembly of the contractile ring via severing actin filaments. Involved in the maintenance of the contractile ring once formed. In association with profilin and capping protein, has a role in the mitotic reorganization of the actin cytoskeleton. The chain is Cofilin (COF1) from Ogataea parapolymorpha (strain ATCC 26012 / BCRC 20466 / JCM 22074 / NRRL Y-7560 / DL-1) (Yeast).